The primary structure comprises 679 residues: UvrABC system protein B (679 aa).

A Helicase ATP-binding domain is found at 25-412 (QGVNSGEEFQ…EGKFIEQVIR (388 aa)). An ATP-binding site is contributed by 38 to 45 (GATGTGKT). The Beta-hairpin signature appears at 91–114 (YYDYYQPEAYVPVSDTYIAKTASI). The Helicase C-terminal domain maps to 429-583 (QIDDLLSEIR…KKYNQINGIT (155 aa)). The UVR domain occupies 639-674 (PSLIDKLENKMKDAAKELNFEEAANLRDRIKKLRQK).

This sequence belongs to the UvrB family. Forms a heterotetramer with UvrA during the search for lesions. Interacts with UvrC in an incision complex.

It is found in the cytoplasm. The UvrABC repair system catalyzes the recognition and processing of DNA lesions. A damage recognition complex composed of 2 UvrA and 2 UvrB subunits scans DNA for abnormalities. Upon binding of the UvrA(2)B(2) complex to a putative damaged site, the DNA wraps around one UvrB monomer. DNA wrap is dependent on ATP binding by UvrB and probably causes local melting of the DNA helix, facilitating insertion of UvrB beta-hairpin between the DNA strands. Then UvrB probes one DNA strand for the presence of a lesion. If a lesion is found the UvrA subunits dissociate and the UvrB-DNA preincision complex is formed. This complex is subsequently bound by UvrC and the second UvrB is released. If no lesion is found, the DNA wraps around the other UvrB subunit that will check the other stand for damage. The sequence is that of UvrABC system protein B from Prochlorococcus marinus subsp. pastoris (strain CCMP1986 / NIES-2087 / MED4).